Consider the following 113-residue polypeptide: UPF0482 protein YnfB (113 aa).

Residues 1–28 (MKITLSKRIGLLAILLPCALALSTTVHA) form the signal peptide.

It belongs to the UPF0482 family.

This chain is UPF0482 protein YnfB, found in Escherichia coli O8 (strain IAI1).